Consider the following 199-residue polypeptide: Fe/S biogenesis protein NfuA (199 aa).

Cys151 and Cys154 together coordinate [4Fe-4S] cluster.

Belongs to the NfuA family. In terms of assembly, homodimer. The cofactor is [4Fe-4S] cluster.

Functionally, involved in iron-sulfur cluster biogenesis. Binds a 4Fe-4S cluster, can transfer this cluster to apoproteins, and thereby intervenes in the maturation of Fe/S proteins. Could also act as a scaffold/chaperone for damaged Fe/S proteins. This Stenotrophomonas maltophilia (strain R551-3) protein is Fe/S biogenesis protein NfuA.